The chain runs to 1787 residues: Chitin synthase 5 (1787 aa).

The interval 1–26 is disordered; it reads MASRRMSMYSVTSEGMGGPRGAGQQS. The N-linked (GlcNAc...) asparagine glycan is linked to N164. Residues 345-367 form a disordered region; that stretch reads RIRDGDESSDGGRGARTPNSAED. N643, N657, N668, and N695 each carry an N-linked (GlcNAc...) asparagine glycan. 2 consecutive transmembrane segments (helical) span residues 747–767 and 783–803; these read MWVALVWAITFWIPSPLLRYV and FVLCFIIFLLNAAIVFWIIFL. 2 N-linked (GlcNAc...) asparagine glycosylation sites follow: N894 and N1018. The chain crosses the membrane as a helical span at residues 1055–1075; it reads FLLAFAIIMCAVILLKFVSAL. N1420 carries N-linked (GlcNAc...) asparagine glycosylation. The next 3 helical transmembrane spans lie at 1445–1465, 1478–1498, and 1506–1526; these read FVVFVDLFGTIILPATCVYLG, FPLITLIMLAAVYGLQALIFI, and IGWMIIYLLAFPIYSFILPIY. A glycan (N-linked (GlcNAc...) asparagine) is linked at N1533. The interval 1628–1657 is disordered; sequence SPNSPAPYQHMSRSPTAYAGPTPYSDNPAA. A DEK-C domain is found at 1729–1785; it reads GPDDFQIVDAIRAVLMEVDLDTVTKKQVRALVEQRLQTELVGERRTFLDRQIDNELA.

It belongs to the chitin synthase family. Class V subfamily.

The protein localises to the cell membrane. The catalysed reaction is [(1-&gt;4)-N-acetyl-beta-D-glucosaminyl](n) + UDP-N-acetyl-alpha-D-glucosamine = [(1-&gt;4)-N-acetyl-beta-D-glucosaminyl](n+1) + UDP + H(+). Its function is as follows. Polymerizes chitin, a structural polymer of the cell wall and septum, by transferring the sugar moiety of UDP-GlcNAc to the non-reducing end of the growing chitin polymer. May play a minor overlapping role with CHS6 in growth and differentiation. The protein is Chitin synthase 5 of Pyricularia oryzae (strain 70-15 / ATCC MYA-4617 / FGSC 8958) (Rice blast fungus).